The following is a 50-amino-acid chain: Conotoxin Bu13 (50 aa).

Ala-1 is a signal peptide. Positions 2-24 (EDSRGTQLHRALRKTTKLSLSIR) are excised as a propeptide. 3 cysteine pairs are disulfide-bonded: Cys-25–Cys-40, Cys-32–Cys-44, and Cys-39–Cys-49.

This sequence belongs to the conotoxin O1 superfamily. As to expression, expressed by the venom duct.

Its subcellular location is the secreted. The protein is Conotoxin Bu13 of Conus bullatus (Bubble cone).